The primary structure comprises 266 residues: Orotidine 5'-phosphate decarboxylase (266 aa).

Substrate-binding positions include Asp38, 60 to 62 (KTH), 92 to 101 (DRKFADIGNT), Tyr218, and Arg236. Lys94 functions as the Proton donor in the catalytic mechanism.

The protein belongs to the OMP decarboxylase family.

It carries out the reaction orotidine 5'-phosphate + H(+) = UMP + CO2. Its pathway is pyrimidine metabolism; UMP biosynthesis via de novo pathway; UMP from orotate: step 2/2. The polypeptide is Orotidine 5'-phosphate decarboxylase (URA3) (Candida maltosa (Yeast)).